The chain runs to 106 residues: Thioredoxin-like protein YdbP (106 aa).

In terms of domain architecture, Thioredoxin spans 1-106 (MKKITTNEQF…VTEFLSEHIS (106 aa)). A disulfide bond links Cys-29 and Cys-32.

This sequence belongs to the thioredoxin family.

Its function is as follows. Participates in various redox reactions through the reversible oxidation of its active center dithiol to a disulfide and catalyzes dithiol-disulfide exchange reactions. In Bacillus subtilis (strain 168), this protein is Thioredoxin-like protein YdbP (ydbP).